We begin with the raw amino-acid sequence, 1185 residues long: Chromosome partition protein Smc (1185 aa).

32–39 contributes to the ATP binding site; sequence PNGSGKSN. Residues 167 to 494 adopt a coiled-coil conformation; the sequence is ISKYKSRKMD…KLNEKNSHLS (328 aa). The SMC hinge domain occupies 521–639; the sequence is TGIIGVVADQ…TDLKSAIEIA (119 aa). Residues 677–1031 are a coiled coil; that stretch reads RSRKIEDLKK…KVIQEIEETM (355 aa).

This sequence belongs to the SMC family. Homodimer.

It localises to the cytoplasm. In terms of biological role, required for chromosome condensation and partitioning. The sequence is that of Chromosome partition protein Smc from Halothermothrix orenii (strain H 168 / OCM 544 / DSM 9562).